The sequence spans 202 residues: MRNVSMTQRISEVVRNTNETKIRVRLNLDGTGQGTLNTGVPFLDHMIDQIKQHGLFDIDIHCDGDLEIDDHHTVEDCGITLGQAFAQALGDKKGLRRYGHFYAPLDEALSRVVVDLSGRPGLFMDIPFTRARIGTFDVDLFSEFFQGFVNHALMTLHIDNLKGKNSHHQIESVFKALARALRMACEIDPRAENTIASTKGSL.

The protein belongs to the imidazoleglycerol-phosphate dehydratase family.

The protein resides in the cytoplasm. It catalyses the reaction D-erythro-1-(imidazol-4-yl)glycerol 3-phosphate = 3-(imidazol-4-yl)-2-oxopropyl phosphate + H2O. It participates in amino-acid biosynthesis; L-histidine biosynthesis; L-histidine from 5-phospho-alpha-D-ribose 1-diphosphate: step 6/9. This is Imidazoleglycerol-phosphate dehydratase from Acinetobacter baumannii (strain SDF).